We begin with the raw amino-acid sequence, 2156 residues long: Probable capsid protein 3 (2156 aa).

The tract at residues 1319 to 1345 (NKSNKSNKSNESDKSSESDKSSESSNH) is disordered. Residues 1326–1345 (KSNESDKSSESDKSSESSNH) are compositionally biased toward basic and acidic residues.

It belongs to the NCLDV major capsid protein family.

It is found in the virion. The sequence is that of Probable capsid protein 3 from Acanthamoeba polyphaga mimivirus (APMV).